The following is a 201-amino-acid chain: FMN-dependent NADH:quinone oxidoreductase (201 aa).

FMN-binding positions include Ser-9 and 16-18 (SYS).

Belongs to the azoreductase type 1 family. Homodimer. The cofactor is FMN.

The catalysed reaction is 2 a quinone + NADH + H(+) = 2 a 1,4-benzosemiquinone + NAD(+). The enzyme catalyses N,N-dimethyl-1,4-phenylenediamine + anthranilate + 2 NAD(+) = 2-(4-dimethylaminophenyl)diazenylbenzoate + 2 NADH + 2 H(+). Its function is as follows. Quinone reductase that provides resistance to thiol-specific stress caused by electrophilic quinones. Also exhibits azoreductase activity. Catalyzes the reductive cleavage of the azo bond in aromatic azo compounds to the corresponding amines. The sequence is that of FMN-dependent NADH:quinone oxidoreductase from Mesomycoplasma hyopneumoniae (strain J / ATCC 25934 / NCTC 10110) (Mycoplasma hyopneumoniae).